A 316-amino-acid polypeptide reads, in one-letter code: Ribosomal RNA small subunit methyltransferase H (316 aa).

S-adenosyl-L-methionine is bound by residues 35–37, Asp-55, Phe-79, Asp-101, and Gln-108; that span reads GGH. The interval 291 to 316 is disordered; sequence AIKPSKDEVDENTRSRSSVLRIAEKL. Residues 294 to 304 are compositionally biased toward basic and acidic residues; that stretch reads PSKDEVDENTR.

Belongs to the methyltransferase superfamily. RsmH family.

Its subcellular location is the cytoplasm. It carries out the reaction cytidine(1402) in 16S rRNA + S-adenosyl-L-methionine = N(4)-methylcytidine(1402) in 16S rRNA + S-adenosyl-L-homocysteine + H(+). Its function is as follows. Specifically methylates the N4 position of cytidine in position 1402 (C1402) of 16S rRNA. In Vibrio atlanticus (strain LGP32) (Vibrio splendidus (strain Mel32)), this protein is Ribosomal RNA small subunit methyltransferase H.